The sequence spans 993 residues: uncharacterized protein (993 aa).

A signal peptide spans 1–28; it reads MKLFPRSILITLVLSFALNLGIVTKIHA. The next 7 helical transmembrane spans lie at 331-351, 359-379, 392-412, 494-514, 521-541, 554-574, and 699-719; these read IVTA…LLAG, YINF…INIT, MIQW…SWVM, MLVS…AFMV, MISI…FLFA, MISF…MFSV, and IKNI…MYNF. Positions 779-904 are disordered; the sequence is GQGGGASDLE…EKVDSTSKGT (126 aa). Residues 805 to 829 show a composition bias toward low complexity; it reads TSAPAVTTPTASSSVASSSPKTVSS. Residues 838 to 850 are compositionally biased toward pro residues; that stretch reads PPAPTEAVSPPPA. Basic and acidic residues predominate over residues 866-879; sequence IIRDNNQESKKEID.

The protein belongs to the TrbL/VirB6 family.

The protein localises to the cell membrane. This is an uncharacterized protein from Rickettsia conorii (strain ATCC VR-613 / Malish 7).